Here is a 175-residue protein sequence, read N- to C-terminus: Translation initiation factor IF-3 (175 aa).

Belongs to the IF-3 family. In terms of assembly, monomer.

It is found in the cytoplasm. Functionally, IF-3 binds to the 30S ribosomal subunit and shifts the equilibrium between 70S ribosomes and their 50S and 30S subunits in favor of the free subunits, thus enhancing the availability of 30S subunits on which protein synthesis initiation begins. This is Translation initiation factor IF-3 from Chlamydia trachomatis serovar D (strain ATCC VR-885 / DSM 19411 / UW-3/Cx).